The chain runs to 445 residues: Phosphoglucosamine mutase (445 aa).

Ser102 (phosphoserine intermediate) is an active-site residue. Residues Ser102, Asp241, Asp243, and Asp245 each contribute to the Mg(2+) site. Ser102 carries the phosphoserine modification.

This sequence belongs to the phosphohexose mutase family. It depends on Mg(2+) as a cofactor. In terms of processing, activated by phosphorylation.

The enzyme catalyses alpha-D-glucosamine 1-phosphate = D-glucosamine 6-phosphate. In terms of biological role, catalyzes the conversion of glucosamine-6-phosphate to glucosamine-1-phosphate. This is Phosphoglucosamine mutase from Escherichia coli (strain 55989 / EAEC).